A 100-amino-acid polypeptide reads, in one-letter code: uncharacterized protein (100 aa).

This is an uncharacterized protein from Caulobacter vibrioides (strain ATCC 19089 / CIP 103742 / CB 15) (Caulobacter crescentus).